The sequence spans 380 residues: MASVAELKEKHAAATASVNSLRERLRQRRQMLLDTDVERYSRTQGRTPVSFNPTDLVCCRTLQGHSGKVYSLDWTPEKNWIVSASQDGRLIVWNALTSQKTHAIKLHCPWVMTCAFAPNGQSVACGGLDSACSIFNLNSQADRDGNIPVSRILTGHKGYVSSCQYVPDQETRLITSSGDQTCVLWDVTTGQRISIFGGEFPSGHTADVLSLSINSSNSNMFVSGSCDATVRLWDIRIASRAVRTYHGHEGDINSVKFFPDGQRFGTGSDDGTCRLFDVRTGHQLQVYSREPDRNDNELPTVTSIAFSISGRLLFAGYSNGDCYVWDTLLAEVVLNLGNLQNSHEGRISCLGLSSDGSALCTGSWDKNLKIWAFSGHRKIV.

WD repeat units follow at residues 64–94 (GHSG…IVWN), 106–136 (LHCP…SIFN), 155–186 (GHKG…VLWD), 203–234 (GHTA…RLWD), 247–277 (GHEG…RLFD), 296–326 (NELP…YVWD), and 342–372 (SHEG…KIWA).

The protein belongs to the WD repeat G protein beta family. In terms of assembly, g proteins are composed of 3 units, alpha, beta and gamma. Interacts with the gamma subunits RGG1 and RGG2.

The protein resides in the cell membrane. Guanine nucleotide-binding proteins (G proteins) are involved as modulators or transducers in various transmembrane signaling systems. The beta and gamma chains are required for the GTPase activity, for replacement of GDP by GTP, and for G protein-effector interaction. The chain is Guanine nucleotide-binding protein subunit beta from Oryza sativa subsp. japonica (Rice).